We begin with the raw amino-acid sequence, 844 residues long: NADPH-Fe(3+) oxidoreductase subunit alpha (844 aa).

The 2Fe-2S ferredoxin-type domain maps to 1-78 (MVSLTIDGKD…GIKVTTQSEK (78 aa)). [2Fe-2S] cluster contacts are provided by Cys34, Cys45, Cys48, and Cys62. Residues 78-117 (KLSRIRQKIMELMLVNHPLDCPVCDAGGECDLQNACYGLG) form the 4Fe-4S His(Cys)3-ligated-type domain. The [4Fe-4S] cluster site is built by His94, Cys98, Cys101, Cys107, Cys146, Cys149, Cys152, Cys186, Cys189, Cys192, Cys196, Cys222, Cys225, Cys229, and Cys256. 2 4Fe-4S ferredoxin-type domains span residues 137 to 168 (PLIESDPNRCILCEKCVKVDHEIVGCNAIRVV) and 177 to 206 (DTVDGNPLNCEFCGNCVAACPTGTLISKPF). One can recognise a 4Fe-4S Mo/W bis-MGD-type domain in the interval 215–270 (FTTTPSVCPFCATGCQIEYHSRNGRVERVTSDDSTYNSGNLCINGRFGYSYINSPD).

Heterotetramer with 2 beta subunits. [4Fe-4S] cluster serves as cofactor.

The protein localises to the cell inner membrane. With respect to regulation, not regulated by FAD or FMN. The SfrAB enzymatic complex is probably involved in acetate metabolism and does not participate directly in the reduction of Fe(3+) chelates. May serve as a major route for NADP regeneration. This is NADPH-Fe(3+) oxidoreductase subunit alpha (sfrA) from Geobacter sulfurreducens (strain DL-1 / KN400).